The chain runs to 1014 residues: Endogenous retrovirus group K member 10 Pol protein (1014 aa).

The region spanning Leu-57–Ile-245 is the Reverse transcriptase domain. Positions Leu-161–Gly-164 match the LPQG motif. The YXDD signature appears at Tyr-195 to Asp-198. The RNase H type-1 domain occupies Leu-460–Ile-590. Positions 469, 497, 517, and 582 each coordinate Mg(2+). An Integrase-type zinc finger spans residues Ser-587–Gln-628. Residues His-596, His-600, Cys-624, and Cys-627 each coordinate Zn(2+). The Integrase catalytic domain maps to Arg-642 to Lys-803. The segment at residues Lys-811–Glu-859 is a DNA-binding region (integrase-type).

It belongs to the beta type-B retroviral polymerase family. HERV class-II K(HML-2) pol subfamily.

The enzyme catalyses DNA(n) + a 2'-deoxyribonucleoside 5'-triphosphate = DNA(n+1) + diphosphate. It catalyses the reaction Endonucleolytic cleavage to 5'-phosphomonoester.. Early post-infection, the reverse transcriptase converts the viral RNA genome into double-stranded viral DNA. The RNase H domain of the reverse transcriptase performs two functions. It degrades the RNA template and specifically removes the RNA primer from the RNA/DNA hybrid. Following nuclear import, the integrase catalyzes the insertion of the linear, double-stranded viral DNA into the host cell chromosome. Endogenous Pol proteins may have kept, lost or modified their original function during evolution. The polypeptide is Endogenous retrovirus group K member 10 Pol protein (ERVK-10) (Homo sapiens (Human)).